Here is a 519-residue protein sequence, read N- to C-terminus: Ribonuclease Y (519 aa).

The helical transmembrane segment at 3–23 (PMTVLISILLTLLGLVVGYYV) threads the bilayer. Residues 209 to 272 (TVSVVNLPND…ETARIALDKL (64 aa)) form the KH domain. The HD domain occupies 335 to 428 (VLKHSMEVAF…VAAADALSAA (94 aa)).

It belongs to the RNase Y family.

It is found in the cell membrane. In terms of biological role, endoribonuclease that initiates mRNA decay. The chain is Ribonuclease Y from Bacillus velezensis (strain DSM 23117 / BGSC 10A6 / LMG 26770 / FZB42) (Bacillus amyloliquefaciens subsp. plantarum).